The following is a 178-amino-acid chain: MNPFHDLEPGPDVPEVVYAIIEIPKGSRNKYELDKKTGLLKLDRVLYSPFFYPVDYGIIPRTWYEDDDPFDIMVIMREPVYPLTIIEARPIGLFKMIDSGDKDYKVLAVPVEDPYFKDWKDIDDVPKAFLDEIAHFFKRYKELQGKEIIVEGWEGAEAAKREILRAIEMYKEKFGKKE.

3 residues coordinate substrate: Lys-30, Arg-44, and Tyr-56. 3 residues coordinate Mg(2+): Asp-66, Asp-71, and Asp-103. A substrate-binding site is contributed by Tyr-140.

The protein belongs to the PPase family. As to quaternary structure, homohexamer. The cofactor is Mg(2+).

The protein resides in the cytoplasm. The enzyme catalyses diphosphate + H2O = 2 phosphate + H(+). Functionally, catalyzes the hydrolysis of inorganic pyrophosphate (PPi) forming two phosphate ions. The protein is Inorganic pyrophosphatase of Pyrococcus furiosus (strain ATCC 43587 / DSM 3638 / JCM 8422 / Vc1).